Consider the following 645-residue polypeptide: Cytochrome c oxidase subunit 1 (645 aa).

A helical transmembrane segment spans residues 8 to 28 (LNYFYFSMWTGLSGAALATMI). Ca(2+) is bound by residues E31 and G36. H54 provides a ligand contact to Fe(II)-heme a. Transmembrane regions (helical) follow at residues 56 to 76 (LIMV…NFLI), 90 to 110 (LNSI…KIAF), 247 to 267 (VLSV…LTLI), 282 to 302 (VLIP…AIVT), 337 to 357 (LFWF…FGVA), 376 to 396 (IWAV…HMYL), 410 to 430 (ITIM…LTLA), and 438 to 458 (LVFL…FTGM). A Cu cation-binding site is contributed by H343. Positions 343–347 (HPEVY) form a cross-link, 1'-histidyl-3'-tyrosine (His-Tyr). Y347 lines the O2 pocket. The Cu cation site is built by H392 and H393. The Mg(2+) site is built by H470 and D471. 3 helical membrane passes run 475-495 (VVAH…FTGL), 513-533 (FLHL…MFFL), and 555-575 (LASC…FGIF). H478 contributes to the heme a3 binding site. H480 is a binding site for Fe(II)-heme a.

Belongs to the heme-copper respiratory oxidase family. Component of the cytochrome c oxidase (complex IV, CIV), a multisubunit enzyme composed of a catalytic core of 3 subunits and several supernumerary subunits. The complex exists as a monomer or a dimer and forms supercomplexes (SCs) in the inner mitochondrial membrane with ubiquinol-cytochrome c oxidoreductase (cytochrome b-c1 complex, complex III, CIII). Heme serves as cofactor. Requires Cu cation as cofactor.

It localises to the mitochondrion inner membrane. It catalyses the reaction 4 Fe(II)-[cytochrome c] + O2 + 8 H(+)(in) = 4 Fe(III)-[cytochrome c] + 2 H2O + 4 H(+)(out). It functions in the pathway energy metabolism; oxidative phosphorylation. In terms of biological role, component of the cytochrome c oxidase, the last enzyme in the mitochondrial electron transport chain which drives oxidative phosphorylation. The respiratory chain contains 3 multisubunit complexes succinate dehydrogenase (complex II, CII), ubiquinol-cytochrome c oxidoreductase (cytochrome b-c1 complex, complex III, CIII) and cytochrome c oxidase (complex IV, CIV), that cooperate to transfer electrons derived from NADH and succinate to molecular oxygen, creating an electrochemical gradient over the inner membrane that drives transmembrane transport and the ATP synthase. Cytochrome c oxidase is the component of the respiratory chain that catalyzes the reduction of oxygen to water. Electrons originating from reduced cytochrome c in the intermembrane space (IMS) are transferred via the dinuclear copper A center (CU(A)) of subunit 2 and heme A of subunit 1 to the active site in subunit 1, a binuclear center (BNC) formed by heme A3 and copper B (CU(B)). The BNC reduces molecular oxygen to 2 water molecules using 4 electrons from cytochrome c in the IMS and 4 protons from the mitochondrial matrix. This Paramecium tetraurelia protein is Cytochrome c oxidase subunit 1 (COI).